The chain runs to 340 residues: Thioesterase pkgB (340 aa).

5 residues coordinate Zn(2+): His97, His99, Asp101, His102, and His205. Asp101 serves as the catalytic Proton donor/acceptor. Positions 242 to 258 (SSRNGGSTSSIGSVSES) are enriched in low complexity. The interval 242 to 271 (SSRNGGSTSSIGSVSESGDSDEEDNNMKTS) is disordered.

The protein belongs to the metallo-beta-lactamase superfamily. Zn(2+) is required as a cofactor.

It carries out the reaction 3,5,7,9,11,13-hexaoxotetradecanoyl-[ACP] = dehydrocitreoisocoumarin + holo-[ACP] + H2O. The catalysed reaction is 3,5,7,9,11-pentaoxododecanoyl-[ACP] = 6,8-dihydroxy-3-(2-oxopropyl)-isocoumarin + holo-[ACP] + H2O. Thioesterase; part of the pkg gene cluster that mediates the biosynthesis of dihydrocitreoisocoumarin and 6,8-dihydroxy-3-(2-oxopropyl)-isocoumarin. The non-reducing polyketide synthase pkgA performs the condensation of one acetyl-CoA starter unit with 6 and 5 malonyl-CoA units, respectively. As pkgA lacks a releasing domain, the thioesterase pkgB is necessary to break the thioester bond and release dihydrocitreoisocoumarin and 6,8-dihydroxy-3-(2-oxopropyl)-isocoumarin from pkgA. This is Thioesterase pkgB from Emericella nidulans (strain FGSC A4 / ATCC 38163 / CBS 112.46 / NRRL 194 / M139) (Aspergillus nidulans).